Here is a 98-residue protein sequence, read N- to C-terminus: UPF0235 protein Ping_3043 (98 aa).

It belongs to the UPF0235 family.

The sequence is that of UPF0235 protein Ping_3043 from Psychromonas ingrahamii (strain DSM 17664 / CCUG 51855 / 37).